Reading from the N-terminus, the 457-residue chain is Vasoactive intestinal polypeptide receptor (457 aa).

Positions 1–19 (MGLVEVVWWWRWRFGGGGG) are cleaved as a signal peptide. Topologically, residues 20–141 (GLVVEVEVWW…KEQTAFYGTV (122 aa)) are extracellular. Cystine bridges form between Cys51-Cys73, Cys64-Cys105, and Cys87-Cys122. Asn59, Asn70, Asn100, and Asn104 each carry an N-linked (GlcNAc...) asparagine glycan. A helical transmembrane segment spans residues 142–166 (KTGYTIGHTLSLIALTAAMIILCLF). The Cytoplasmic portion of the chain corresponds to 167–173 (RKLHCTR). Residues 174 to 193 (NYIHMHLFMSFIMRAIAVFI) form a helical membrane-spanning segment. Topologically, residues 194–215 (KDVTLFESGEPEHCFVSSVGCK) are extracellular. Cys214 and Cys284 are joined by a disulfide. Residues 216 to 239 (AMMVFFQYCVMANFFWLLVEGLYL) form a helical membrane-spanning segment. At 240–253 (HTLLVISFFSERKY) the chain is on the cytoplasmic side. A helical membrane pass occupies residues 254 to 275 (FWWYILIGWGAPSVFITAWTVV). Topologically, residues 276 to 292 (RIYFFNVGCWEEIIESP) are extracellular. The helical transmembrane segment at 293 to 316 (IWWIIKTPILVSILVNFILFICII) threads the bilayer. Over 317–341 (RILVQKLHSPDVGHNETSQYSRLAK) the chain is Cytoplasmic. Residues 342–361 (STLLLIPLFGIHYIMFAFFP) traverse the membrane as a helical segment. The Extracellular portion of the chain corresponds to 362 to 373 (DNFKAQVKLVFE). A helical membrane pass occupies residues 374-393 (LVVGSFQGFVVAVLYCFLNG). At 394–457 (EVQAELKRKW…SSFQAEFSLV (64 aa)) the chain is on the cytoplasmic side.

Belongs to the G-protein coupled receptor 2 family. As to expression, expressed in pituitary, hypothalamus, small intestine and ovarian follicles.

The protein localises to the cell membrane. In terms of biological role, this is a receptor for VIP. The activity of this receptor is mediated by G proteins which activate adenylyl cyclase. This chain is Vasoactive intestinal polypeptide receptor (VIPR1), found in Meleagris gallopavo (Wild turkey).